Consider the following 324-residue polypeptide: Germination protease (324 aa).

Residues 1–10 (MIIVLGIRTD) constitute a propeptide that is removed on maturation.

It belongs to the peptidase A25 family. As to quaternary structure, homotetramer. Autoproteolytically processed. The inactive tetrameric zymogen termed p46 autoprocesses to a smaller form termed p41, which is active only during spore germination.

The catalysed reaction is Endopeptidase action with P4 Glu or Asp, P1 preferably Glu &gt; Asp, P1' hydrophobic and P2' Ala.. Initiates the rapid degradation of small, acid-soluble proteins during spore germination. The polypeptide is Germination protease (Caldanaerobacter subterraneus subsp. tengcongensis (strain DSM 15242 / JCM 11007 / NBRC 100824 / MB4) (Thermoanaerobacter tengcongensis)).